We begin with the raw amino-acid sequence, 392 residues long: uncharacterized protein (392 aa).

The next 10 helical transmembrane spans lie at 2 to 23, 38 to 60, 73 to 95, 153 to 175, 195 to 217, 237 to 259, 272 to 291, 297 to 319, 331 to 353, and 357 to 379; these read WLAN…SLYI, SGYV…GRFG, GTGI…LFFL, FTYT…LFGV, VLSY…LIQT, VNLA…LLAR, RILI…QALA, LLVF…TAAI, VLGY…GGII, and FTIS…MLWI.

Belongs to the major facilitator superfamily.

Its subcellular location is the cell membrane. This is an uncharacterized protein from Bacillus subtilis (strain 168).